The chain runs to 296 residues: Elongation factor Ts (296 aa).

The involved in Mg(2+) ion dislocation from EF-Tu stretch occupies residues 82-85; sequence TDFV.

Belongs to the EF-Ts family.

The protein resides in the cytoplasm. Associates with the EF-Tu.GDP complex and induces the exchange of GDP to GTP. It remains bound to the aminoacyl-tRNA.EF-Tu.GTP complex up to the GTP hydrolysis stage on the ribosome. This Aromatoleum aromaticum (strain DSM 19018 / LMG 30748 / EbN1) (Azoarcus sp. (strain EbN1)) protein is Elongation factor Ts.